We begin with the raw amino-acid sequence, 319 residues long: Transcription factor STKL2 (319 aa).

The disordered stretch occupies residues 1-119; the sequence is MAPLESPATA…NKKANPQRVW (119 aa). Residues 21 to 34 are compositionally biased toward basic and acidic residues; that stretch reads EIFKSSSEESKPKD. Positions 38–55 are enriched in polar residues; the sequence is VPSSKTLKSPSAAVNSKT. Residues 89–112 show a composition bias toward basic and acidic residues; that stretch reads RAGEGSTSRDMHVKRVKKEDDNKK.

Belongs to the GeBP family. Expressed strongly in leaves and flowers, weakly in roots, and very weakly in stems.

It localises to the nucleus. Its function is as follows. Transcription repressor that binds DNA in a sequence-specific manner, 5'-GCCT-3', to regulate the expression of PGR. Acts as a modulatory component for the glucose-triggered developmental leaf growth process. The protein is Transcription factor STKL2 of Arabidopsis thaliana (Mouse-ear cress).